The primary structure comprises 265 residues: MRGAFYIAIALLIVRSRTATGNAKSDVSRPYVVATGGESTKATPKRYLRGGLALSATNEERMDATVLSKDAKALATEGEDWLRLSLGPVGHSQTPQLKRKFDSLSAIDESSPSKKLATPDRAFTRRFRAEDPQLPKYSKIHQTFLNIPHMPHKISLTEAVLMYRMVNWKNGSSPTKQKSAEALLRLVERTSADDLERALGPTSVRLASQKKIRDEYFKNLTTMYARVHAFCHANPAECTNESTHSPLERKMKAPPDIVLFPLFNR.

The signal sequence occupies residues 1–19 (MRGAFYIAIALLIVRSRTA). Positions 46 to 61 (RYLRGGLALSATNEER) match the RxLR-dEER motif. 3 N-linked (GlcNAc...) asparagine glycosylation sites follow: Asn-170, Asn-219, and Asn-240.

It belongs to the RxLR effector family. N-glycosylated. The putative N-glycosylation site at position 240 is essential for cell death-inducing activity.

Its subcellular location is the secreted. It is found in the host nucleus. Effector that acts as an elicitor that induces cell death and promotes ROS accumulation in Nicotian benthamiana. RxLR16-triggered cell death is dependent on SGT1, HSP90 and RAR1, but independent of the somatic embryogenesis receptor-like kinase SERK3/BAK1, indicating that it acts independently of the detection of cell surface pattern recognition receptors. Enhances the expressional levels of defense-associated genes involved in the salicylic acid-, jasmonate acid-, and ethylene-mediated signal transduction, resulting in disease resistance. However, as some other Plasmopara viticola RxLR effectors including RxLR1, RxLR10, RxLR30 and RxLR25, can suppress defense responses and disease resistance induced by RxLR16, it may not trigger host cell death or immune responses during physiological infection under natural conditions. The polypeptide is Secreted RxLR effector protein 16 (Plasmopara viticola (Downy mildew of grapevine)).